The primary structure comprises 429 residues: Ribosomal RNA small subunit methyltransferase B (429 aa).

Residues 254–260, aspartate 277, aspartate 303, and aspartate 322 each bind S-adenosyl-L-methionine; that span reads CAAPGGK. Cysteine 375 acts as the Nucleophile in catalysis.

This sequence belongs to the class I-like SAM-binding methyltransferase superfamily. RsmB/NOP family.

It is found in the cytoplasm. It catalyses the reaction cytidine(967) in 16S rRNA + S-adenosyl-L-methionine = 5-methylcytidine(967) in 16S rRNA + S-adenosyl-L-homocysteine + H(+). Its function is as follows. Specifically methylates the cytosine at position 967 (m5C967) of 16S rRNA. This chain is Ribosomal RNA small subunit methyltransferase B, found in Yersinia pestis bv. Antiqua (strain Angola).